The sequence spans 382 residues: Gap junction alpha-1 protein (382 aa).

Over 2–23 (GDWSALGKLLDKVQAYSTAGGK) the chain is Cytoplasmic. S5 carries the phosphoserine modification. Residues 24-44 (VWLSVLFIFRILLLGTAVESA) form a helical membrane-spanning segment. The Extracellular segment spans residues 45 to 76 (WGDEQSAFRCNTQQPGCENVCYDKSFPISHVR). 2 disulfides stabilise this stretch: C54/C192 and C187/C198. Residues 77–97 (FWVLQIIFVSVPTLLYLAHVF) traverse the membrane as a helical segment. Residues 98-155 (YVMRKEEKLNKKEEELKVAQTDGVNVEMHLKQIEIKKFKYGIEEHGKVKMRGGLLRTY) are Cytoplasmic-facing. Residue K144 forms a Glycyl lysine isopeptide (Lys-Gly) (interchain with G-Cter in SUMO) linkage. Residues 156 to 176 (IISILFKSIFEVAFLLIQWYI) traverse the membrane as a helical segment. Topologically, residues 177-207 (YGFSLSAVYTCKRDPCPHQVDCFLSRPTEKT) are extracellular. Residues 208-228 (IFIIFMLVVSLVSLALNIIEL) traverse the membrane as a helical segment. Residues 229 to 382 (FYVFFKGVKD…SRPRPDDLEI (154 aa)) are Cytoplasmic-facing. K237 is covalently cross-linked (Glycyl lysine isopeptide (Lys-Gly) (interchain with G-Cter in SUMO)). The tract at residues 244-382 (SDPYHATSGA…SRPRPDDLEI (139 aa)) is interaction with NOV. Phosphotyrosine is present on Y247. Residues S255 and S262 each carry the phosphoserine modification. The interaction with UBQLN4 stretch occupies residues 264–382 (KYAYFNGCSS…SRPRPDDLEI (119 aa)). Residue C271 is modified to S-nitrosocysteine. The residue at position 275 (T275) is a Phosphothreonine. The tract at residues 279 to 300 (SPMSPPGYKPVTGDRNNSSCRN) is disordered. Phosphoserine is present on residues S306 and S314. The span at 317–332 (QNRMGQAGSTISNSHA) shows a compositional bias: polar residues. Positions 317 to 382 (QNRMGQAGST…SRPRPDDLEI (66 aa)) are disordered. S325 carries the post-translational modification Phosphoserine; by CK1. Position 326 is a phosphothreonine (T326). Residues S328 and S330 each carry the phosphoserine; by CK1 modification. Phosphoserine is present on residues S344 and S365. Residues 362–374 (RPSSRASSRASSR) are compositionally biased toward low complexity. Residue S368 is modified to Phosphoserine; by PKC/PRKCG and PKC/PRKCD. Phosphoserine is present on residues S369 and S373.

This sequence belongs to the connexin family. Alpha-type (group II) subfamily. A connexon is composed of a hexamer of connexins. Interacts with SGSM3. Interacts with RIC1/CIP150. Interacts with CNST and CSNK1D. Interacts (via C-terminus) with TJP1. Interacts (via C-terminus) with SRC (via SH3 domain). Interacts (not ubiquitinated) with UBQLN4 (via UBA domain). Interacts with NOV. Interacts with TMEM65. Interacts with ANK3/ANKG and PKP2. Post-translationally, phosphorylation at Ser-325, Ser-328 and Ser-330 by CK1 modulates gap junction assembly. Phosphorylated at Ser-368 by PRKCG; phosphorylation induces disassembly of gap junction plaques and inhibition of gap junction activity. Phosphorylation at Ser-368 by PRKCD triggers its internalization into small vesicles leading to proteasome-mediated degradation. Sumoylated with SUMO1, SUMO2 and SUMO3, which may regulate the level of functional Cx43 gap junctions at the plasma membrane. May be desumoylated by SENP1 or SENP2. In terms of processing, S-nitrosylation at Cys-271 is enriched at the muscle endothelial gap junction in arteries, it augments channel permeability and may regulate of smooth muscle cell to endothelial cell communication. Post-translationally, acetylated in the developing cortex; leading to delocalization from the cell membrane.

It is found in the cell membrane. The protein localises to the cell junction. Its subcellular location is the gap junction. The protein resides in the endoplasmic reticulum. Its function is as follows. Gap junction protein that acts as a regulator of bladder capacity. A gap junction consists of a cluster of closely packed pairs of transmembrane channels, the connexons, through which materials of low MW diffuse from one cell to a neighboring cell. May play a critical role in the physiology of hearing by participating in the recycling of potassium to the cochlear endolymph. Negative regulator of bladder functional capacity: acts by enhancing intercellular electrical and chemical transmission, thus sensitizing bladder muscles to cholinergic neural stimuli and causing them to contract. May play a role in cell growth inhibition through the regulation of NOV expression and localization. Plays an essential role in gap junction communication in the ventricles. This Macaca fascicularis (Crab-eating macaque) protein is Gap junction alpha-1 protein (GJA1).